The following is a 290-amino-acid chain: Enoyl-CoA hydratase, mitochondrial (290 aa).

The N-terminal 27 residues, 1–27 (MAALRALLPRVRAPLRPWLFCPVQRSF), are a transit peptide targeting the mitochondrion. Residues 98–101 (ADIK) and Gly-141 contribute to the substrate site. Lys-101 bears the N6-acetyllysine; alternate mark. Lys-101 carries the post-translational modification N6-succinyllysine; alternate. At Lys-204 the chain carries N6-succinyllysine. Lys-211 is subject to N6-acetyllysine.

This sequence belongs to the enoyl-CoA hydratase/isomerase family. Homohexamer; dimer of trimers.

It localises to the mitochondrion matrix. The enzyme catalyses a (3S)-3-hydroxyacyl-CoA = a (2E)-enoyl-CoA + H2O. It catalyses the reaction a (3E)-enoyl-CoA = a 4-saturated (2E)-enoyl-CoA. It carries out the reaction (3E)-hexenoyl-CoA = (2E)-hexenoyl-CoA. The catalysed reaction is (3S)-3-hydroxybutanoyl-CoA = (2E)-butenoyl-CoA + H2O. The enzyme catalyses 3-hydroxyisovaleryl-CoA = 3-methylbut-2-enoyl-CoA + H2O. It catalyses the reaction 3-hydroxypropanoyl-CoA = acryloyl-CoA + H2O. It carries out the reaction 3-hydroxybutanoyl-CoA = (2E)-butenoyl-CoA + H2O. The catalysed reaction is 2-methylpropenoyl-CoA + H2O = (S)-3-hydroxyisobutanoyl-CoA. The enzyme catalyses (3S)-hydroxyhexanoyl-CoA = (2E)-hexenoyl-CoA + H2O. It catalyses the reaction (3S)-hydroxydecanoyl-CoA = (2E)-decenoyl-CoA + H2O. It functions in the pathway lipid metabolism; fatty acid beta-oxidation. In terms of biological role, converts unsaturated trans-2-enoyl-CoA species ((2E)-enoyl-CoA) to the corresponding 3(S)-3-hydroxyacyl-CoA species through addition of a water molecule to the double bond. Catalyzes the hydration of medium- and short-chained fatty enoyl-CoA thioesters from 4 carbons long (C4) up to C16. Has high substrate specificity for crotonyl-CoA ((2E)-butenoyl-CoA) and moderate specificity for acryloyl-CoA, 3-methylcrotonyl-CoA (3-methyl-(2E)-butenoyl-CoA) and methacrylyl-CoA ((2E)-2-methylpropenoyl-CoA). Can bind tiglyl-CoA (2-methylcrotonoyl-CoA), but hydrates only a small amount of this substrate. Plays a key role in the beta-oxidation spiral of short- and medium-chain fatty acid oxidation. At a lower rate than the hydratase reaction, catalyzes the isomerase reaction of trans-3-enoyl-CoA species (such as (3E)-hexenoyl-CoA) to trans-2-enoyl-CoA species (such as (2E)-hexenoyl-CoA), which are subsequently hydrated to 3(S)-3-hydroxyacyl-CoA species (such as (3S)-hydroxyhexanoyl-CoA). In Bos taurus (Bovine), this protein is Enoyl-CoA hydratase, mitochondrial (ECHS1).